The sequence spans 158 residues: Cysteine-rich venom protein VAR7 (158 aa).

A signal peptide spans 1–22; it reads MILLKLYLTLAAILCQSRGTTS. The 118-residue stretch at 41-158 folds into the SCP domain; sequence NKHNDLRRTV…MGCAINLCPN (118 aa). Cys-77 and Cys-156 are oxidised to a cystine.

It belongs to the CRISP family. In terms of processing, contains 8 disulfide bonds. In terms of tissue distribution, expressed by the venom gland.

It localises to the secreted. Blocks ryanodine receptors, and potassium channels. In Varanus acanthurus (Ridge-tailed monitor), this protein is Cysteine-rich venom protein VAR7.